Here is a 297-residue protein sequence, read N- to C-terminus: Glycerol-3-phosphate dehydrogenase [NAD(P)+] (297 aa).

The NADPH site is built by W11, R33, and K79. K79, G107, and S109 together coordinate sn-glycerol 3-phosphate. Position 111 (A111) interacts with NADPH. Sn-glycerol 3-phosphate is bound by residues K161, D214, S224, R225, and N226. K161 acts as the Proton acceptor in catalysis. R225 provides a ligand contact to NADPH. NADPH-binding residues include V249 and E251.

This sequence belongs to the NAD-dependent glycerol-3-phosphate dehydrogenase family.

It localises to the cytoplasm. The enzyme catalyses sn-glycerol 3-phosphate + NAD(+) = dihydroxyacetone phosphate + NADH + H(+). It carries out the reaction sn-glycerol 3-phosphate + NADP(+) = dihydroxyacetone phosphate + NADPH + H(+). It functions in the pathway membrane lipid metabolism; glycerophospholipid metabolism. In terms of biological role, catalyzes the reduction of the glycolytic intermediate dihydroxyacetone phosphate (DHAP) to sn-glycerol 3-phosphate (G3P), the key precursor for phospholipid synthesis. This chain is Glycerol-3-phosphate dehydrogenase [NAD(P)+], found in Campylobacter jejuni subsp. jejuni serotype O:6 (strain 81116 / NCTC 11828).